Here is a 249-residue protein sequence, read N- to C-terminus: Isoprenyl transferase (249 aa).

Aspartate 25 is a catalytic residue. Position 25 (aspartate 25) interacts with Mg(2+). Substrate is bound by residues 26 to 29, tryptophan 30, arginine 38, histidine 42, and 70 to 72; these read GNGR and STE. Asparagine 73 acts as the Proton acceptor in catalysis. Substrate-binding positions include tryptophan 74, arginine 76, arginine 197, and 203–205; that span reads RLS. Glutamate 216 provides a ligand contact to Mg(2+).

The protein belongs to the UPP synthase family. In terms of assembly, homodimer. Mg(2+) serves as cofactor.

In terms of biological role, catalyzes the condensation of isopentenyl diphosphate (IPP) with allylic pyrophosphates generating different type of terpenoids. This Streptococcus mutans serotype c (strain ATCC 700610 / UA159) protein is Isoprenyl transferase.